Consider the following 397-residue polypeptide: Argininosuccinate synthase (397 aa).

Residue 9 to 17 participates in ATP binding; the sequence is AYSGGLDTS. Y86 contributes to the L-citrulline binding site. G116 lines the ATP pocket. Residues T118, N122, and D123 each coordinate L-aspartate. N122 serves as a coordination point for L-citrulline. Residues R126, S174, E259, and Y271 each contribute to the L-citrulline site.

The protein belongs to the argininosuccinate synthase family. Type 1 subfamily. As to quaternary structure, homotetramer.

The protein localises to the cytoplasm. The catalysed reaction is L-citrulline + L-aspartate + ATP = 2-(N(omega)-L-arginino)succinate + AMP + diphosphate + H(+). Its pathway is amino-acid biosynthesis; L-arginine biosynthesis; L-arginine from L-ornithine and carbamoyl phosphate: step 2/3. The sequence is that of Argininosuccinate synthase from Lactococcus lactis subsp. cremoris (strain MG1363).